Here is a 537-residue protein sequence, read N- to C-terminus: 5,6-dihydroxyindole-2-carboxylic acid oxidase (537 aa).

Positions 1-24 (MKSPTLLSLGYMFLVLLFFQQAWA) are cleaved as a signal peptide. At 25-477 (QFPRECATIE…WPSRSFSISE (453 aa)) the chain is on the lumenal, melanosome side. 5 cysteine pairs are disulfide-bonded: cysteine 30-cysteine 41, cysteine 42-cysteine 65, cysteine 56-cysteine 99, cysteine 101-cysteine 110, and cysteine 113-cysteine 122. N-linked (GlcNAc...) asparagine glycosylation is found at asparagine 96 and asparagine 104. An N-linked (GlcNAc...) asparagine glycan is attached at asparagine 181. Zn(2+)-binding residues include histidine 192, histidine 215, and histidine 224. Intrachain disulfides connect cysteine 258–cysteine 261 and cysteine 290–cysteine 303. 2 N-linked (GlcNAc...) asparagine glycosylation sites follow: asparagine 304 and asparagine 350. Zn(2+)-binding residues include histidine 377 and histidine 381. Asparagine 385 carries an N-linked (GlcNAc...) asparagine glycan. A Zn(2+)-binding site is contributed by histidine 404. The helical transmembrane segment at 478-501 (IVTIAVVAALSLVAVIFAGASCLI) threads the bilayer. At 502 to 537 (RARSNMDEANQPLLTDQYQHYIEEYEKIHNPNQSVV) the chain is on the cytoplasmic side.

Belongs to the tyrosinase family. Monomer. Interacts with ATP7A. Interacts with SLC45A2. The cofactor is Cu(2+). Requires Zn(2+) as cofactor. Glycosylated.

It is found in the melanosome membrane. It catalyses the reaction 2 5,6-dihydroxyindole-2-carboxylate + O2 = 2 indole-5,6-quinone-2-carboxylate + 2 H2O. The protein operates within pigment biosynthesis; melanin biosynthesis. Its function is as follows. Plays a role in melanin biosynthesis. Catalyzes the oxidation of 5,6-dihydroxyindole-2-carboxylic acid (DHICA) into indole-5,6-quinone-2-carboxylic acid. May regulate or influence the type of melanin synthesized. Also to a lower extent, capable of hydroxylating tyrosine and producing melanin. In Bos taurus (Bovine), this protein is 5,6-dihydroxyindole-2-carboxylic acid oxidase (TYRP1).